A 545-amino-acid chain; its full sequence is Sphingosine-1-phosphate lyase (545 aa).

At 1–26 the chain is on the lumenal side; the sequence is MRPFSGSDCLKPVTEGINRAFGAKEP. A helical; Signal-anchor for type III membrane protein transmembrane segment spans residues 27–47; that stretch reads WQVATITATTVLGGVWLWTVI. The Cytoplasmic segment spans residues 48–545; sequence CQDENLYIRG…HSMYYTPSQK (498 aa). Lysine 342 carries the post-translational modification N6-(pyridoxal phosphate)lysine.

Belongs to the group II decarboxylase family. Sphingosine-1-phosphate lyase subfamily. Pyridoxal 5'-phosphate serves as cofactor. Localized to the developing gut primordium during embryogenesis.

Its subcellular location is the endoplasmic reticulum membrane. The enzyme catalyses sphinganine 1-phosphate = hexadecanal + phosphoethanolamine. The protein operates within lipid metabolism; sphingolipid metabolism. Cleaves phosphorylated sphingoid bases (PSBs), such as sphingosine-1-phosphate, into fatty aldehydes and phosphoethanolamine. Sphingolipid catabolism is required for normal development including viability, reproduction and muscle development. The polypeptide is Sphingosine-1-phosphate lyase (Drosophila melanogaster (Fruit fly)).